Consider the following 522-residue polypeptide: MQDFWHAASAQLESELTPQQFKTWIKPLTPLSFDEQACMLRIAAPNRFKLDWVKSQFSGRIQSLACDYWEMQVDVQFVLDPTAGQRQAAMQPALAPMPMQPLAAQTMQAQAVPREAPARPTMAPYRETPMATAAHAAADIDVPVMDAAEASTQSYRVPAPAAPAVMGGLSAPPAAPVDDTVHERSRLNPILTFDNLVTGKANQLARAAAVQVANNPGKSYNPLYLYGGVGLGKTHLIHAIGNFMLMENPRARIRYIHAEQYVSDVVKAYQRKAFDDFKRYYHSLDLLLIDDIQFFSGKNRTQEEFFYAFEALIANRAQVIITSDTYPKEITGIDDRLISRFDSGLTVAIEPPELEMRVAILMKKAQAENVTVPEEVAFFVAKHLRSNVRELEGALRKILAYSNFHGKEITIEVTREALKDLLTVQNRQISVENIQKTCADFYNIKVADMYSKKRPANIARPRQIAMYLAKELTQKSLPEIGELFGGRDHTTVLHAVRKIADERSKDAQLNHELHVLEQTLKG.

Positions 1-71 are domain I, interacts with DnaA modulators; that stretch reads MQDFWHAASA…QSLACDYWEM (71 aa). Residues 71 to 185 are domain II; it reads MQVDVQFVLD…PVDDTVHERS (115 aa). The tract at residues 186-402 is domain III, AAA+ region; that stretch reads RLNPILTFDN…GALRKILAYS (217 aa). G230, G232, K233, and T234 together coordinate ATP. A domain IV, binds dsDNA region spans residues 403–522; sequence NFHGKEITIE…LHVLEQTLKG (120 aa).

Belongs to the DnaA family. Oligomerizes as a right-handed, spiral filament on DNA at oriC.

It is found in the cytoplasm. Its function is as follows. Plays an essential role in the initiation and regulation of chromosomal replication. ATP-DnaA binds to the origin of replication (oriC) to initiate formation of the DNA replication initiation complex once per cell cycle. Binds the DnaA box (a 9 base pair repeat at the origin) and separates the double-stranded (ds)DNA. Forms a right-handed helical filament on oriC DNA; dsDNA binds to the exterior of the filament while single-stranded (ss)DNA is stabiized in the filament's interior. The ATP-DnaA-oriC complex binds and stabilizes one strand of the AT-rich DNA unwinding element (DUE), permitting loading of DNA polymerase. After initiation quickly degrades to an ADP-DnaA complex that is not apt for DNA replication. Binds acidic phospholipids. This Ralstonia nicotianae (strain ATCC BAA-1114 / GMI1000) (Ralstonia solanacearum) protein is Chromosomal replication initiator protein DnaA.